Reading from the N-terminus, the 91-residue chain is DNA-binding protein HU (91 aa).

It belongs to the bacterial histone-like protein family.

Functionally, histone-like DNA-binding protein which is capable of wrapping DNA to stabilize it, and thus to prevent its denaturation under extreme environmental conditions. Also seems to act as a fortuitous virulence factor in delayed sequelae by binding to heparan sulfate-proteoglycans in the extracellular matrix of target organs and acting as a nidus for in situ immune complex formation. This chain is DNA-binding protein HU (hup), found in Streptococcus pyogenes serotype M1.